A 303-amino-acid chain; its full sequence is N-acetyl-D-glucosamine kinase (303 aa).

Residues Gly4–Lys11 and Gly133–Phe140 contribute to the ATP site. Zn(2+) is bound by residues His157, Cys177, Cys179, and Cys184.

It belongs to the ROK (NagC/XylR) family. NagK subfamily.

It catalyses the reaction N-acetyl-D-glucosamine + ATP = N-acetyl-D-glucosamine 6-phosphate + ADP + H(+). It participates in cell wall biogenesis; peptidoglycan recycling. In terms of biological role, catalyzes the phosphorylation of N-acetyl-D-glucosamine (GlcNAc) derived from cell-wall degradation, yielding GlcNAc-6-P. The chain is N-acetyl-D-glucosamine kinase from Escherichia fergusonii (strain ATCC 35469 / DSM 13698 / CCUG 18766 / IAM 14443 / JCM 21226 / LMG 7866 / NBRC 102419 / NCTC 12128 / CDC 0568-73).